A 274-amino-acid polypeptide reads, in one-letter code: Eukaryotic translation initiation factor 3 subunit J (274 aa).

Disordered stretches follow at residues 1–120 and 227–246; these read MSGK…DLKH and EEKA…TKTS. Acidic residues predominate over residues 30 to 50; the sequence is DEEGNESDVLDSWDAAEDSEV. The stretch at 46–112 forms a coiled coil; it reads EDSEVEREKA…AERRERLRRE (67 aa). Basic and acidic residues-rich tracts occupy residues 51 to 67 and 79 to 92; these read EREK…KAEA and RIAE…RQLA. Residues 93-102 are compositionally biased toward acidic residues; sequence EDSDAEEETE. Positions 103-120 are enriched in basic and acidic residues; the sequence is AERRERLRREQKESDLKH.

The protein belongs to the eIF-3 subunit J family. In terms of assembly, component of the eukaryotic translation initiation factor 3 (eIF-3) complex.

Its subcellular location is the cytoplasm. In terms of biological role, component of the eukaryotic translation initiation factor 3 (eIF-3) complex, which is involved in protein synthesis of a specialized repertoire of mRNAs and, together with other initiation factors, stimulates binding of mRNA and methionyl-tRNAi to the 40S ribosome. The eIF-3 complex specifically targets and initiates translation of a subset of mRNAs involved in cell proliferation. The polypeptide is Eukaryotic translation initiation factor 3 subunit J (hcr-1) (Neurospora crassa (strain ATCC 24698 / 74-OR23-1A / CBS 708.71 / DSM 1257 / FGSC 987)).